The sequence spans 162 residues: Caveolin-2 (162 aa).

The Cytoplasmic segment spans residues 1-86; the sequence is MGLETEKADA…FEVSKYLIYK (86 aa). Tyr19 bears the Phosphotyrosine; by SRC mark. A disordered region spans residues 19–40; the sequence is YSRHSGLGYPEPEKCAKSTQDR. Phosphoserine occurs at positions 20 and 23. At Tyr27 the chain carries Phosphotyrosine; by SRC. Residues 29-40 show a composition bias toward basic and acidic residues; the sequence is EPEKCAKSTQDR. Ser36 is subject to Phosphoserine. Residues 87–107 constitute an intramembrane region (helical); sequence VLTVLLAIPLAFVAGILFATL. Residues 108-162 are Cytoplasmic-facing; that stretch reads SCLHIWIVVPFVKTCLMVLPSVQTVWHSITDGFIAPLYKSMGLIFSSISLRLSPE.

It belongs to the caveolin family. Monomer or homodimer. Interacts with CAV1; the interaction forms a stable heterooligomeric complex that is required for targeting to lipid rafts and for caveolae formation. Tyrosine phosphorylated forms do not form heterooligomers with the Tyr-19-phosphorylated form existing as a monomer or dimer, and the Tyr-27-form as a monomer only. Interacts (tyrosine phosphorylated form) with the SH2 domain-containing proteins, RASA1, NCK1 and SRC. Interacts (tyrosine phosphorylated form) with INSR, the interaction (Tyr-27-phosphorylated form) is increased on insulin stimulation. Interacts (Tyr-19 phosphorylated form) with MAPK1 (phosphorylated form); the interaction, promoted by insulin, leads to nuclear location and MAPK1 activation. Interacts with STAT3; the interaction is increased on insulin-induced tyrosine phosphorylation leading to STAT activation. In terms of processing, phosphorylated on serine and tyrosine residues. CAV1 promotes phosphorylation on Ser-23 which then targets the complex to the plasma membrane, lipid rafts and caveolae. Phosphorylation on Ser-36 appears to modulate mitosis in endothelial cells. Phosphorylation on both Tyr-19 and Tyr-27 is required for insulin-induced 'Ser-727' phosphorylation of STAT3 and its activation. Phosphorylation on Tyr-19 is required for insulin-induced phosphorylation of MAPK1 and DNA binding of STAT3. Tyrosine phosphorylation is induced by both EGF and insulin (By. similarity).

The protein resides in the nucleus. It localises to the cytoplasm. Its subcellular location is the golgi apparatus membrane. It is found in the cell membrane. The protein localises to the membrane. The protein resides in the caveola. In terms of biological role, may act as a scaffolding protein within caveolar membranes. Interacts directly with G-protein alpha subunits and can functionally regulate their activity. Acts as an accessory protein in conjunction with CAV1 in targeting to lipid rafts and driving caveolae formation. The Ser-36 phosphorylated form has a role in modulating mitosis in endothelial cells. Positive regulator of cellular mitogenesis of the MAPK signaling pathway. Required for the insulin-stimulated nuclear translocation and activation of MAPK1 and STAT3, and the subsequent regulation of cell cycle progression. The sequence is that of Caveolin-2 (CAV2) from Didelphis virginiana (North American opossum).